A 20-amino-acid polypeptide reads, in one-letter code: Toxin TpF21-Cocle (20 aa).

In terms of domain architecture, LCN-type CS-alpha/beta spans 1–20; that stretch reads KDGYLVGNDGCKYSCNTYPK.

It belongs to the long (4 C-C) scorpion toxin superfamily. Sodium channel inhibitor family. Beta subfamily. As to expression, expressed by the venom gland.

It is found in the secreted. Beta toxins bind voltage-independently at site-4 of sodium channels (Nav) and shift the voltage of activation toward more negative potentials thereby affecting sodium channel activation and promoting spontaneous and repetitive firing. The polypeptide is Toxin TpF21-Cocle (Tityus pachyurus (Colombian scorpion)).